The chain runs to 704 residues: DNA-directed DNA polymerase (704 aa).

Residues methionine 1–serine 187 are 3'-5'exonuclease. Aspartate 5, glutamate 7, and aspartate 174 together coordinate Mg(2+). Residues glycine 202–histidine 704 are polymerase. Residues glycine 262–serine 338 are binding to host TrxA. Residues aspartate 475 and alanine 476 each contribute to the Mg(2+) site. 4 residues coordinate substrate: histidine 506, arginine 518, lysine 522, and tyrosine 526. Residue aspartate 654 coordinates Mg(2+).

Belongs to the DNA polymerase type-A family. Composed of two subunits. One is encoded by the phage and the other is encoded by the host thioredoxin. Interacts with DNA primase/helicase; this interaction is essential for the coordination of DNA unwinding and nucleotide polymerization on duplex DNA. Interacts with the ssDNA-binding protein. Part of the replicase complex that includes the DNA polymerase, thioredoxin, the primase/helicase and the single-stranded DNA binding protein. Requires Mg(2+) as cofactor.

It carries out the reaction DNA(n) + a 2'-deoxyribonucleoside 5'-triphosphate = DNA(n+1) + diphosphate. In terms of biological role, replicates viral genomic DNA. This polymerase possesses two enzymatic activities: DNA synthesis (polymerase) and an exonucleolytic activity that degrades single-stranded DNA in the 3'-5' direction. Non-processive DNA polymerase that achieves processivity by binding to host thioredoxin (TrxA). This interaction increases the rate of dNTP incorporation to yield a processivity of approximately 800 nucleotides (nt) per binding event. Interacts with DNA helicase gp4 to coordinate nucleotide polymerization with unwinding of the DNA. The leading strand is synthesized continuously while synthesis of the lagging strand requires the synthesis of oligoribonucleotides by the primase domain of gp4. In Escherichia phage T7 (Bacteriophage T7), this protein is DNA-directed DNA polymerase.